Here is a 73-residue protein sequence, read N- to C-terminus: Translation initiation factor IF-1 (73 aa).

The S1-like domain occupies 1 to 72; the sequence is MAKQDVIEME…TKGRITYRLR (72 aa).

It belongs to the IF-1 family. As to quaternary structure, component of the 30S ribosomal translation pre-initiation complex which assembles on the 30S ribosome in the order IF-2 and IF-3, IF-1 and N-formylmethionyl-tRNA(fMet); mRNA recruitment can occur at any time during PIC assembly.

The protein resides in the cytoplasm. Functionally, one of the essential components for the initiation of protein synthesis. Stabilizes the binding of IF-2 and IF-3 on the 30S subunit to which N-formylmethionyl-tRNA(fMet) subsequently binds. Helps modulate mRNA selection, yielding the 30S pre-initiation complex (PIC). Upon addition of the 50S ribosomal subunit IF-1, IF-2 and IF-3 are released leaving the mature 70S translation initiation complex. This Gloeobacter violaceus (strain ATCC 29082 / PCC 7421) protein is Translation initiation factor IF-1.